The primary structure comprises 212 residues: MRGRFLVLEGIDGCGKTTQLKALADWLPASGLMPSGAQLITTREPGGTALGQALRQLLLHPPEEQAPATRAELLLYAADRAQHVQTRLEPALAAGDWVLSDRYCGSTAAYQGYGRGLDLDLITQLEQLATAGLQPDLCLWLELSPELAAQRRSGQQQDRIEAEGLAFLARVHQGFAELSQRPLWRRVDASLPPEQVHQQVQHLVREGLELAL.

10-17 (GIDGCGKT) lines the ATP pocket.

The protein belongs to the thymidylate kinase family.

The enzyme catalyses dTMP + ATP = dTDP + ADP. Its function is as follows. Phosphorylation of dTMP to form dTDP in both de novo and salvage pathways of dTTP synthesis. The chain is Thymidylate kinase from Synechococcus sp. (strain RCC307).